We begin with the raw amino-acid sequence, 124 residues long: T cell receptor beta variable 13 (124 aa).

A signal peptide spans 1–31 (MLSPDLPDSAWNTRLLCRVMLCLLGAGSVAA). An Ig-like domain is found at 32–124 (GVIQSPRHLI…SALYFCASSL (93 aa)). A disulfide bond links cysteine 52 and cysteine 120. Asparagine 106 carries an N-linked (GlcNAc...) asparagine glycan.

Alpha-beta TR is a heterodimer composed of an alpha and beta chain; disulfide-linked. The alpha-beta TR is associated with the transmembrane signaling CD3 coreceptor proteins to form the TR-CD3 (TcR or TCR). The assembly of alpha-beta TR heterodimers with CD3 occurs in the endoplasmic reticulum where a single alpha-beta TR heterodimer associates with one CD3D-CD3E heterodimer, one CD3G-CD3E heterodimer and one CD247 homodimer forming a stable octameric structure. CD3D-CD3E and CD3G-CD3E heterodimers preferentially associate with TR alpha and TR beta chains, respectively. The association of the CD247 homodimer is the last step of TcR assembly in the endoplasmic reticulum and is required for transport to the cell surface.

The protein resides in the cell membrane. Functionally, v region of the variable domain of T cell receptor (TR) beta chain that participates in the antigen recognition. Alpha-beta T cell receptors are antigen specific receptors which are essential to the immune response and are present on the cell surface of T lymphocytes. Recognize peptide-major histocompatibility (MH) (pMH) complexes that are displayed by antigen presenting cells (APC), a prerequisite for efficient T cell adaptive immunity against pathogens. Binding of alpha-beta TR to pMH complex initiates TR-CD3 clustering on the cell surface and intracellular activation of LCK that phosphorylates the ITAM motifs of CD3G, CD3D, CD3E and CD247 enabling the recruitment of ZAP70. In turn ZAP70 phosphorylates LAT, which recruits numerous signaling molecules to form the LAT signalosome. The LAT signalosome propagates signal branching to three major signaling pathways, the calcium, the mitogen-activated protein kinase (MAPK) kinase and the nuclear factor NF-kappa-B (NF-kB) pathways, leading to the mobilization of transcription factors that are critical for gene expression and essential for T cell growth and differentiation. The T cell repertoire is generated in the thymus, by V-(D)-J rearrangement. This repertoire is then shaped by intrathymic selection events to generate a peripheral T cell pool of self-MH restricted, non-autoaggressive T cells. Post-thymic interaction of alpha-beta TR with the pMH complexes shapes TR structural and functional avidity. This chain is T cell receptor beta variable 13, found in Homo sapiens (Human).